The following is a 239-amino-acid chain: Ribose-5-phosphate isomerase A (239 aa).

Substrate contacts are provided by residues 39–42 (SGST), 95–98 (DGAD), and 108–111 (KGGG). The active-site Proton acceptor is E117. K135 is a binding site for substrate.

Belongs to the ribose 5-phosphate isomerase family. In terms of assembly, homodimer.

The catalysed reaction is aldehydo-D-ribose 5-phosphate = D-ribulose 5-phosphate. It participates in carbohydrate degradation; pentose phosphate pathway; D-ribose 5-phosphate from D-ribulose 5-phosphate (non-oxidative stage): step 1/1. Its function is as follows. Catalyzes the reversible conversion of ribose-5-phosphate to ribulose 5-phosphate. The chain is Ribose-5-phosphate isomerase A from Chlamydia muridarum (strain MoPn / Nigg).